Reading from the N-terminus, the 366-residue chain is Phospho-N-acetylmuramoyl-pentapeptide-transferase (366 aa).

Helical transmembrane passes span 3–23, 52–72, 80–100, 120–140, 161–181, 197–217, 238–258, 262–282, 287–307, and 341–361; these read QIII…PVLI, MGGI…GIVG, LTAS…LGFA, LIGQ…FPNA, LAIG…YILI, LAAG…FWQF, LAIL…WNAA, IFMG…LSVA, LLMI…VIQV, and FWLI…GEWL.

The protein belongs to the glycosyltransferase 4 family. MraY subfamily. Mg(2+) is required as a cofactor.

The protein resides in the cell membrane. The catalysed reaction is UDP-N-acetyl-alpha-D-muramoyl-L-alanyl-gamma-D-glutamyl-meso-2,6-diaminopimeloyl-D-alanyl-D-alanine + di-trans,octa-cis-undecaprenyl phosphate = di-trans,octa-cis-undecaprenyl diphospho-N-acetyl-alpha-D-muramoyl-L-alanyl-D-glutamyl-meso-2,6-diaminopimeloyl-D-alanyl-D-alanine + UMP. Its pathway is cell wall biogenesis; peptidoglycan biosynthesis. Catalyzes the initial step of the lipid cycle reactions in the biosynthesis of the cell wall peptidoglycan: transfers peptidoglycan precursor phospho-MurNAc-pentapeptide from UDP-MurNAc-pentapeptide onto the lipid carrier undecaprenyl phosphate, yielding undecaprenyl-pyrophosphoryl-MurNAc-pentapeptide, known as lipid I. In Corynebacterium diphtheriae (strain ATCC 700971 / NCTC 13129 / Biotype gravis), this protein is Phospho-N-acetylmuramoyl-pentapeptide-transferase.